A 555-amino-acid polypeptide reads, in one-letter code: Connector enhancer of kinase suppressor of ras 3 (555 aa).

One can recognise an SAM domain in the interval 7–72; sequence WSPKQVVDWT…LEAVDLLCAL (66 aa). A CRIC domain is found at 80 to 174; that stretch reads NMKNLVLKLR…TAVQKDCLVA (95 aa). In terms of domain architecture, PDZ spans 211 to 293; the sequence is EVHLPNVRPG…GVVLLLKKRP (83 aa). Disordered stretches follow at residues 308–333, 348–391, and 518–538; these read RWKP…MDAS, PPPA…LDQE, and PFQE…ASSG. Residues 311 to 329 show a composition bias toward low complexity; the sequence is PPLVQTSPPPTTTQSPEST. Positions 325–546 constitute a DUF1170 domain; that stretch reads SPESTMDASL…SGEPSLLVSW (222 aa). Phosphoserine occurs at positions 381 and 383.

The protein belongs to the CNKSR family. In terms of assembly, interacts with epithelial sodium channel ENaC. Interacts directly with SCNN1A (ENaC subunit alpha) and SCNN1B (ENaC subunit beta) C-terminal tails. Interacts with ENaC regulatory proteins NEDD4L, RAF1 and SGK1.

The protein localises to the cytoplasm. It is found in the apical cell membrane. Its function is as follows. Involved in transepithelial sodium transport. Regulates aldosterone-induced and epithelial sodium channel (ENaC)-mediated sodium transport through regulation of ENaC cell surface expression. Acts as a scaffold protein coordinating the assembly of an ENaC-regulatory complex (ERC). The chain is Connector enhancer of kinase suppressor of ras 3 (Cnksr3) from Rattus norvegicus (Rat).